The chain runs to 886 residues: Alanine--tRNA ligase (886 aa).

The Zn(2+) site is built by H564, H568, C666, and H670.

This sequence belongs to the class-II aminoacyl-tRNA synthetase family. It depends on Zn(2+) as a cofactor.

The protein localises to the cytoplasm. It catalyses the reaction tRNA(Ala) + L-alanine + ATP = L-alanyl-tRNA(Ala) + AMP + diphosphate. In terms of biological role, catalyzes the attachment of alanine to tRNA(Ala) in a two-step reaction: alanine is first activated by ATP to form Ala-AMP and then transferred to the acceptor end of tRNA(Ala). Also edits incorrectly charged Ser-tRNA(Ala) and Gly-tRNA(Ala) via its editing domain. This Prochlorococcus marinus (strain MIT 9312) protein is Alanine--tRNA ligase.